An 843-amino-acid chain; its full sequence is Potassium transporter 10 (843 aa).

Residues 1–15 (MKSPSPVDPESPSSP) are compositionally biased toward low complexity. Positions 1–25 (MKSPSPVDPESPSSPDCKGGSSSKR) are disordered. The Cytoplasmic portion of the chain corresponds to 1-34 (MKSPSPVDPESPSSPDCKGGSSSKRRRLPWRMTM). The chain crosses the membrane as a helical span at residues 35–55 (SLAYQSLGVVYGDLSTSPLYV). Residues 56 to 72 (YKAAFAEDIQHSETNEE) are Vacuolar-facing. A helical transmembrane segment spans residues 73-93 (ILGVLSFVFWTLTLVPLLKYV). The Cytoplasmic portion of the chain corresponds to 94-183 (CVVLRADDNG…LLERHKVLQR (90 aa)). A helical membrane pass occupies residues 184-204 (VLLVLALVGTCMVIGDGVLTP). Over 205 to 225 (AISVFSAVSGLELSMEKHQHK) the chain is Vacuolar. Residues 226 to 246 (YVEVPIACFVLVCLFCLQHYG) form a helical membrane-spanning segment. The Cytoplasmic segment spans residues 247–249 (THR). The chain crosses the membrane as a helical span at residues 250–270 (VGFLFAPIVITWLLCISMIGV). Topologically, residues 271–298 (YNIVHWEPNVYRALSPYYMYKFLKKTQR) are vacuolar. A helical transmembrane segment spans residues 299–319 (GGWMSLGGILLCITGSEAMFA). Over 320-326 (DLGHFNQ) the chain is Cytoplasmic. Residues 327 to 347 (LSIQIAFTCMVYPSLILAYMG) traverse the membrane as a helical segment. Residues 348-377 (QAAYLCKHHIIESDYRIGFYVSVPEKIRWP) lie on the Vacuolar side of the membrane. Residues 378 to 398 (VLAIAILAAVVGSQAVITGTF) form a helical membrane-spanning segment. Residues 399–425 (SMIKQCTALGCFPRVKIVHTSDKVHGQ) are Cytoplasmic-facing. The chain crosses the membrane as a helical span at residues 426–446 (IYIPEINWILMILCLAITIGF). Over 447–451 (RDTKH) the chain is Vacuolar. A helical transmembrane segment spans residues 452–472 (LGNASGLAVITVMLVTTCLMS). The Cytoplasmic segment spans residues 473–482 (LVIVLCWHKS). Residues 483–505 (IFLAFGFIIFFGTIEALYFSASL) form a helical membrane-spanning segment. At 506–510 (IKFRE) the chain is on the vacuolar side. The helical transmembrane segment at 511–531 (GAWVPIVLAFIFMAIMCIWHY) threads the bilayer. Topologically, residues 532-843 (GTIKKYEFDL…TLEVGMIYYV (312 aa)) are cytoplasmic. Residues 667 to 747 (AASSKPKNVC…IMSPSPSPPP (81 aa)) form a disordered region. Gly residues predominate over residues 718–735 (GGSGSGSGRGSSRGGGGA).

Belongs to the HAK/KUP transporter (TC 2.A.72.3) family. In terms of tissue distribution, expressed in roots, shoots, and panicle at flowering stage.

The protein localises to the vacuole membrane. High-affinity potassium transporter. This chain is Potassium transporter 10 (HAK10), found in Oryza sativa subsp. japonica (Rice).